A 655-amino-acid polypeptide reads, in one-letter code: Interferon-induced GTP-binding protein Mx2 (655 aa).

Positions 1-18 (MVLSTEENTGVDSVNLPS) are enriched in polar residues. The segment at 1–28 (MVLSTEENTGVDSVNLPSGETGLGEKDQ) is disordered. One can recognise a Dynamin-type G domain in the interval 60-333 (DLALPAIAVI…LISHICKSLP (274 aa)). The interval 70 to 77 (GDQSSGKS) is G1 motif. Position 70 to 77 (70 to 77 (GDQSSGKS)) interacts with GTP. The segment at 95–97 (VTR) is G2 motif. A G3 motif region spans residues 171–174 (DLPG). GTP-binding positions include 171 to 175 (DLPGI) and 240 to 243 (TKPD). Residues 240–243 (TKPD) form a G4 motif region. A G5 motif region spans residues 272-275 (KCRG). The segment at 542–562 (EAEEEKKTKHGTSSSSQSQDL) is disordered. Residues 552-562 (GTSSSSQSQDL) are compositionally biased toward low complexity. The GED domain occupies 567 to 655 (MAEIFQHLNA…ARRRLAKFPG (89 aa)).

It belongs to the TRAFAC class dynamin-like GTPase superfamily. Dynamin/Fzo/YdjA family.

Its subcellular location is the cytoplasm. Interferon-induced dynamin-like GTPase with antiviral activity against vesicular stomatitis virus (VSV) and Hantaan virus (HNTV). This Mus musculus (Mouse) protein is Interferon-induced GTP-binding protein Mx2 (Mx2).